Consider the following 244-residue polypeptide: 2,5-diamino-6-ribosylamino-4(3H)-pyrimidinone 5'-phosphate reductase (244 aa).

NADP(+)-binding positions include threonine 74, aspartate 78, isoleucine 160, and 183 to 187; that span reads GSHVI.

The protein belongs to the HTP reductase family. As to quaternary structure, homodimer.

It catalyses the reaction 2,5-diamino-6-(1-D-ribitylamino)pyrimidin-4(3H)-one 5'-phosphate + NADP(+) = 2,5-diamino-6-(1-D-ribosylamino)pyrimidin-4(3H)-one 5'-phosphate + NADPH + H(+). The enzyme catalyses 2,5-diamino-6-(1-D-ribitylamino)pyrimidin-4(3H)-one 5'-phosphate + NAD(+) = 2,5-diamino-6-(1-D-ribosylamino)pyrimidin-4(3H)-one 5'-phosphate + NADH + H(+). Its pathway is cofactor biosynthesis; riboflavin biosynthesis. Catalyzes an early step in riboflavin biosynthesis, the NADPH-dependent reduction of the ribose side chain of 2,5-diamino-6-ribosylamino-4(3H)-pyrimidinone 5'-phosphate, yielding 2,5-diamino-6-ribitylamino-4(3H)-pyrimidinone 5'-phosphate. In Candida glabrata (strain ATCC 2001 / BCRC 20586 / JCM 3761 / NBRC 0622 / NRRL Y-65 / CBS 138) (Yeast), this protein is 2,5-diamino-6-ribosylamino-4(3H)-pyrimidinone 5'-phosphate reductase (RIB7).